The following is a 363-amino-acid chain: Elongation factor Tu, chloroplastic (363 aa).

One can recognise a tr-type G domain in the interval 1 to 189; that stretch reads TLTAAITMAL…NVDEYIPTPE (189 aa). GTP is bound by residues 55–59 and 110–113; these read DCPGH and NKED.

It belongs to the TRAFAC class translation factor GTPase superfamily. Classic translation factor GTPase family. EF-Tu/EF-1A subfamily.

It is found in the plastid. It localises to the chloroplast. The enzyme catalyses GTP + H2O = GDP + phosphate + H(+). GTP hydrolase that promotes the GTP-dependent binding of aminoacyl-tRNA to the A-site of ribosomes during protein biosynthesis. This is Elongation factor Tu, chloroplastic (tufA) from Gymnochlora stellata.